Here is a 61-residue protein sequence, read N- to C-terminus: Potassium channel toxin alpha-KTx 3.18 (61 aa).

A signal peptide spans 1-23 (MKMFFTVLVTLFVCSMIIGICEG). Cystine bridges form between cysteine 30/cysteine 50, cysteine 36/cysteine 55, and cysteine 40/cysteine 57. At lysine 60 the chain carries Lysine amide.

Expressed by the venom gland.

The protein resides in the secreted. Inhibits voltage-gated potassium channel rKv1.1/KCNA1 at nanomolar ranges (IC(50)=90 +-2 nM, reduction of current by 30% at 50 nM or toxin). The sequence is that of Potassium channel toxin alpha-KTx 3.18 from Mesobuthus eupeus (Lesser Asian scorpion).